A 379-amino-acid chain; its full sequence is ATP phosphoribosyltransferase regulatory subunit (379 aa).

This sequence belongs to the class-II aminoacyl-tRNA synthetase family. HisZ subfamily. Heteromultimer composed of HisG and HisZ subunits.

Its subcellular location is the cytoplasm. The protein operates within amino-acid biosynthesis; L-histidine biosynthesis; L-histidine from 5-phospho-alpha-D-ribose 1-diphosphate: step 1/9. Required for the first step of histidine biosynthesis. May allow the feedback regulation of ATP phosphoribosyltransferase activity by histidine. In Sinorhizobium fredii (strain NBRC 101917 / NGR234), this protein is ATP phosphoribosyltransferase regulatory subunit.